Reading from the N-terminus, the 226-residue chain is MKITFLGHAAVLVEGKKNLIIDPFITGNPACPVKLEDLPKIDYILVTHGHGDHLGDAVEIAKKNDAIVISNYEICQYLGKKGVKTHAMHIGGSYLFDFGRVKMTPAVHGSGILDGENIIYGGNPGGFLITLEGKKIYHAGDTGLTKDMELLKEENVDVAFLPIGGNFVMDVEDAIRAVSMISPRKVVPMHYGTWEIIFADVELFKKKVEEMGVECVILEPGESLEL.

It belongs to the UPF0173 family.

The polypeptide is UPF0173 metal-dependent hydrolase CTN_1413 (Thermotoga neapolitana (strain ATCC 49049 / DSM 4359 / NBRC 107923 / NS-E)).